The following is a 352-amino-acid chain: Phosphatidylglycerol--prolipoprotein diacylglyceryl transferase (352 aa).

Transmembrane regions (helical) follow at residues 20–40, 55–75, 97–117, and 122–142; these read WYGLSYMMGFICAYILITWLA, FITYAAIGTLVGGRLGYVLFY, EGGMASHGGIIGIVIACLLYA, and VNSLYLLDLVAVTGPIGVFFG. A 1,2-diacyl-sn-glycero-3-phospho-(1'-sn-glycerol) is bound at residue arginine 143. 3 consecutive transmembrane segments (helical) span residues 248–268, 275–295, and 314–334; these read SQLFAAFGEGLLIFMFLFFLW, GFIAACFVLIYAVVRVVDEHF, and WLSLAMFVVGLILMVVWTRAA.

Belongs to the Lgt family.

It localises to the cell inner membrane. It catalyses the reaction L-cysteinyl-[prolipoprotein] + a 1,2-diacyl-sn-glycero-3-phospho-(1'-sn-glycerol) = an S-1,2-diacyl-sn-glyceryl-L-cysteinyl-[prolipoprotein] + sn-glycerol 1-phosphate + H(+). Its pathway is protein modification; lipoprotein biosynthesis (diacylglyceryl transfer). Functionally, catalyzes the transfer of the diacylglyceryl group from phosphatidylglycerol to the sulfhydryl group of the N-terminal cysteine of a prolipoprotein, the first step in the formation of mature lipoproteins. This is Phosphatidylglycerol--prolipoprotein diacylglyceryl transferase from Bdellovibrio bacteriovorus (strain ATCC 15356 / DSM 50701 / NCIMB 9529 / HD100).